The following is a 195-amino-acid chain: Cyclin-dependent kinase inhibitor 7 (195 aa).

Over residues 1 to 11 the composition is skewed to basic and acidic residues; that stretch reads MSETKPKRDSE. Disordered regions lie at residues 1-50, 61-80, and 117-154; these read MSET…SVSD, EEED…SSET, and SSEN…TQAE. 2 stretches are compositionally biased toward low complexity: residues 37–50 and 68–80; these read SSSS…SVSD and SSSI…SSET. Thr151 carries the post-translational modification Phosphothreonine; by KIN10.

Belongs to the CDI family. ICK/KRP subfamily. In terms of assembly, specifically interacts with CDKA-1, but not with CDKB1-1. Interacts with CYCD4-1. Binds to FBL17. In terms of processing, ubiquitinated by SCF(FBL17). Ubiquitination leads to its subsequent degradation, thus controlling cell cycle progression. As to expression, expressed in flowers, in developing pollen, and at lower levels in roots and leaves.

The protein localises to the nucleus. It is found in the nucleoplasm. Its function is as follows. Binds and inhibits CYCD2-1/CDKA-1 complex kinase activity. May target specifically CDKA-1. The protein is Cyclin-dependent kinase inhibitor 7 (KRP7) of Arabidopsis thaliana (Mouse-ear cress).